A 155-amino-acid polypeptide reads, in one-letter code: Large ribosomal subunit protein uL22c (155 aa).

This sequence belongs to the universal ribosomal protein uL22 family. Part of the 50S ribosomal subunit.

The protein localises to the plastid. Its subcellular location is the chloroplast. Its function is as follows. This protein binds specifically to 23S rRNA. The globular domain of the protein is located near the polypeptide exit tunnel on the outside of the subunit, while an extended beta-hairpin is found that lines the wall of the exit tunnel in the center of the 70S ribosome. This chain is Large ribosomal subunit protein uL22c (rpl22), found in Coffea arabica (Arabian coffee).